Reading from the N-terminus, the 96-residue chain is UPF0166 protein aq_448 (96 aa).

It belongs to the UPF0166 family.

The protein is UPF0166 protein aq_448 of Aquifex aeolicus (strain VF5).